Reading from the N-terminus, the 856-residue chain is Envelope glycoprotein gp150 (856 aa).

The Extracellular segment spans residues 1–785; sequence MAEGFVANGQ…WIGNIPQYLK (785 aa). N-linked (GlcNAc...) asparagine; by host glycans are attached at residues asparagine 220, asparagine 258, asparagine 269, asparagine 274, asparagine 298, asparagine 330, asparagine 336, asparagine 342, asparagine 418, asparagine 422, asparagine 448, asparagine 469, asparagine 481, asparagine 499, asparagine 518, asparagine 531, asparagine 548, asparagine 551, and asparagine 556. Residues 616–636 form a fusion peptide region; sequence VMLALATVLSMAGAGTGATAI. A coiled-coil region spans residues 643-693; the sequence is HQVLATQQEAIEKVTEALKITNLRLVTLEHQVLVIGLKVEAMEKFLYTAFA. The interval 662–680 is immunosuppression; the sequence is ITNLRLVTLEHQVLVIGLK. N-linked (GlcNAc...) asparagine; by host glycosylation is found at asparagine 717, asparagine 721, asparagine 729, and asparagine 737. The stretch at 736-772 forms a coiled coil; it reads YNQTKDLQKKFYGIIMDIEQNNVQGKKGLQQLQKWED. Residues 786–806 traverse the membrane as a helical segment; sequence GLLGSIVGIGLGILLLILCLP. Residues 807–856 are Cytoplasmic-facing; the sequence is TLVDCIRNCIHKILGYTVIAMPEVDGEEIQPQMELRRNGRQCGMSEKEEE.

The mature envelope protein (Env) consists of a trimer of SU-TM heterodimers attached by noncovalent interactions or by a labile interchain disulfide bond. Specific enzymatic cleavages in vivo yield mature proteins. Envelope glycoproteins are synthesized as an inactive precursor that is N-glycosylated and processed likely by host cell furin or by a furin-like protease in the Golgi to yield the mature SU and TM proteins. The cleavage site between SU and TM requires the minimal sequence [KR]-X-[KR]-R.

The protein localises to the virion membrane. It localises to the host cell membrane. In terms of biological role, the surface protein (SU) attaches the virus to the host cell by binding to its receptor. This interaction triggers the refolding of the transmembrane protein (TM) and is thought to activate its fusogenic potential by unmasking its fusion peptide. Fusion occurs at the host cell plasma membrane. The transmembrane protein (TM) acts as a class I viral fusion protein. Under the current model, the protein has at least 3 conformational states: pre-fusion native state, pre-hairpin intermediate state, and post-fusion hairpin state. During viral and target cell membrane fusion, the coiled coil regions (heptad repeats) assume a trimer-of-hairpins structure, positioning the fusion peptide in close proximity to the C-terminal region of the ectodomain. The formation of this structure appears to drive apposition and subsequent fusion of viral and target cell membranes. Membranes fusion leads to delivery of the nucleocapsid into the cytoplasm. The polypeptide is Envelope glycoprotein gp150 (env) (Feline immunodeficiency virus (strain UT-113) (FIV)).